We begin with the raw amino-acid sequence, 476 residues long: Replication factor C large subunit (476 aa).

Glycine 50–threonine 57 is an ATP binding site. Positions tyrosine 447–aspartate 476 are disordered. A compositionally biased stretch (basic residues) spans lysine 452–lysine 461.

It belongs to the activator 1 small subunits family. RfcL subfamily. In terms of assembly, heteromultimer composed of small subunits (RfcS) and large subunits (RfcL).

Its function is as follows. Part of the RFC clamp loader complex which loads the PCNA sliding clamp onto DNA. In Ignicoccus hospitalis (strain KIN4/I / DSM 18386 / JCM 14125), this protein is Replication factor C large subunit.